The primary structure comprises 503 residues: Aspartyl/glutamyl-tRNA(Asn/Gln) amidotransferase subunit B (503 aa).

Belongs to the GatB/GatE family. GatB subfamily. Heterotrimer of A, B and C subunits.

The enzyme catalyses L-glutamyl-tRNA(Gln) + L-glutamine + ATP + H2O = L-glutaminyl-tRNA(Gln) + L-glutamate + ADP + phosphate + H(+). It carries out the reaction L-aspartyl-tRNA(Asn) + L-glutamine + ATP + H2O = L-asparaginyl-tRNA(Asn) + L-glutamate + ADP + phosphate + 2 H(+). Functionally, allows the formation of correctly charged Asn-tRNA(Asn) or Gln-tRNA(Gln) through the transamidation of misacylated Asp-tRNA(Asn) or Glu-tRNA(Gln) in organisms which lack either or both of asparaginyl-tRNA or glutaminyl-tRNA synthetases. The reaction takes place in the presence of glutamine and ATP through an activated phospho-Asp-tRNA(Asn) or phospho-Glu-tRNA(Gln). In Roseobacter denitrificans (strain ATCC 33942 / OCh 114) (Erythrobacter sp. (strain OCh 114)), this protein is Aspartyl/glutamyl-tRNA(Asn/Gln) amidotransferase subunit B.